The primary structure comprises 502 residues: Glycerol kinase (502 aa).

Thr14 is a binding site for ADP. ATP is bound by residues Thr14, Thr15, and Ser16. Thr14 is a sn-glycerol 3-phosphate binding site. Arg18 contributes to the ADP binding site. Residues Arg84, Glu85, Tyr136, and Asp246 each contribute to the sn-glycerol 3-phosphate site. Glycerol is bound by residues Arg84, Glu85, Tyr136, Asp246, and Gln247. Residues Thr268 and Gly311 each contribute to the ADP site. Residues Thr268, Gly311, Gln315, and Gly412 each coordinate ATP. Positions 412 and 416 each coordinate ADP.

This sequence belongs to the FGGY kinase family.

It catalyses the reaction glycerol + ATP = sn-glycerol 3-phosphate + ADP + H(+). The protein operates within polyol metabolism; glycerol degradation via glycerol kinase pathway; sn-glycerol 3-phosphate from glycerol: step 1/1. Its activity is regulated as follows. Inhibited by fructose 1,6-bisphosphate (FBP). In terms of biological role, key enzyme in the regulation of glycerol uptake and metabolism. Catalyzes the phosphorylation of glycerol to yield sn-glycerol 3-phosphate. The sequence is that of Glycerol kinase from Pasteurella multocida (strain Pm70).